A 74-amino-acid chain; its full sequence is Cytochrome c oxidase assembly factor 5 (74 aa).

One can recognise a CHCH domain in the interval 27 to 65 (QSDCVLKEGKSPRQCLKEGNCKALKYSFFECKRSMLDAR). The short motif at 30-41 (CVLKEGKSPRQC) is the Cx10C motif element. 2 disulfide bridges follow: Cys30/Cys57 and Cys41/Cys47. The residue at position 37 (Ser37) is a Phosphoserine. The Cx9C motif motif lies at 47-57 (CKALKYSFFEC).

Belongs to the PET191 family.

Functionally, involved in an early step of the mitochondrial complex IV assembly process. The protein is Cytochrome c oxidase assembly factor 5 (COA5) of Bos taurus (Bovine).